The following is a 204-amino-acid chain: ATP phosphoribosyltransferase (204 aa).

Belongs to the ATP phosphoribosyltransferase family. Short subfamily. Heteromultimer composed of HisG and HisZ subunits.

It localises to the cytoplasm. It catalyses the reaction 1-(5-phospho-beta-D-ribosyl)-ATP + diphosphate = 5-phospho-alpha-D-ribose 1-diphosphate + ATP. It functions in the pathway amino-acid biosynthesis; L-histidine biosynthesis; L-histidine from 5-phospho-alpha-D-ribose 1-diphosphate: step 1/9. Functionally, catalyzes the condensation of ATP and 5-phosphoribose 1-diphosphate to form N'-(5'-phosphoribosyl)-ATP (PR-ATP). Has a crucial role in the pathway because the rate of histidine biosynthesis seems to be controlled primarily by regulation of HisG enzymatic activity. In Staphylococcus aureus (strain bovine RF122 / ET3-1), this protein is ATP phosphoribosyltransferase.